A 123-amino-acid chain; its full sequence is Small ribosomal subunit protein uS11 (123 aa).

The protein belongs to the universal ribosomal protein uS11 family. As to quaternary structure, part of the 30S ribosomal subunit. Interacts with proteins S7 and S18. Binds to IF-3.

In terms of biological role, located on the platform of the 30S subunit, it bridges several disparate RNA helices of the 16S rRNA. Forms part of the Shine-Dalgarno cleft in the 70S ribosome. The protein is Small ribosomal subunit protein uS11 of Coxiella burnetii (strain RSA 331 / Henzerling II).